A 26-amino-acid chain; its full sequence is Alpha-amylase inhibitor 1 (26 aa).

The protein belongs to the protease inhibitor I6 (cereal trypsin/alpha-amylase inhibitor) family.

It is found in the secreted. Its function is as follows. Alpha-amylase inhibitor. The polypeptide is Alpha-amylase inhibitor 1 (Saussurea costus (Costus)).